We begin with the raw amino-acid sequence, 754 residues long: Neprilysin-1 (754 aa).

Residues 5–27 traverse the membrane as a helical; Signal-anchor for type II membrane protein segment; that stretch reads FGPPIVFLISCYALILCGTVDAL. 7 N-linked (GlcNAc...) asparagine glycosylation sites follow: N38, N81, N132, N217, N273, N303, and N441. In terms of domain architecture, Peptidase M13 spans 63–754; that stretch reads VGDSEGYQEA…MNPTKRCVVW (692 aa). 4 disulfides stabilise this stretch: C87–C739, C95–C699, C151–C414, and C624–C751. Position 587 (H587) interacts with Zn(2+). E588 is an active-site residue. A Zn(2+)-binding site is contributed by H591. N612 is a glycosylation site (N-linked (GlcNAc...) asparagine). A Zn(2+)-binding site is contributed by E649. D653 (proton donor) is an active-site residue.

The protein belongs to the peptidase M13 family. The cofactor is Zn(2+). In terms of tissue distribution, specifically expressed in pharyngeal cells and a single head neuron.

Its subcellular location is the membrane. Probable cell surface protease. Required to control the neuronal innervation of pharyngeal pumping. The chain is Neprilysin-1 (nep-1) from Caenorhabditis elegans.